The sequence spans 666 residues: Endogenous retrovirus group K member 21 Gag polyprotein (666 aa).

G2 carries N-myristoyl glycine lipidation. Disordered stretches follow at residues 165-189 (GKGP…AGQV) and 217-264 (ELQY…GSEL). Residues 232-247 (GMPPAPQGRAPYPQPP) show a composition bias toward pro residues. CCHC-type zinc fingers lie at residues 544–561 (GKCY…NCPV) and 580–597 (DLCP…QCRS). The segment at 598 to 641 (KFDKNGQPLSGNEQRGQPQAPQQTGAFPIQPFVPQGFQGQQPPL) is disordered. The span at 604 to 622 (QPLSGNEQRGQPQAPQQTG) shows a compositional bias: polar residues. A compositionally biased stretch (low complexity) spans 624–640 (FPIQPFVPQGFQGQQPP).

Belongs to the beta type-B retroviral Gag protein family. HERV class-II K(HML-2) gag subfamily. In terms of processing, myristoylation is essential for retroviral assembly. Alteration of the glycine residue leads to a block in the budding of particles and an accumulation of Gag inside the cell. Post-translationally, specific enzymatic cleavages may yield mature proteins.

Its subcellular location is the cell membrane. Its function is as follows. The products of the Gag polyproteins of infectious retroviruses perform highly complex orchestrated tasks during the assembly, budding, maturation, and infection stages of the viral replication cycle. During viral assembly, the proteins form membrane associations and self-associations that ultimately result in budding of an immature virion from the infected cell. Gag precursors also function during viral assembly to selectively bind and package two plus strands of genomic RNA. Endogenous Gag proteins may have kept, lost or modified their original function during evolution. In Homo sapiens (Human), this protein is Endogenous retrovirus group K member 21 Gag polyprotein (ERVK-21).